Here is a 493-residue protein sequence, read N- to C-terminus: DM7 family protein GM11958 (493 aa).

A disordered region spans residues 434–493 (ATKSTDTRDDGMNTADYQSQFPELEQDSEPEPEPEPEPQTEDEGEDEDIEILASLCSGSI). The span at 457–483 (LEQDSEPEPEPEPEPQTEDEGEDEDIE) shows a compositional bias: acidic residues.

It belongs to the DM7 family.

This is DM7 family protein GM11958 from Drosophila sechellia (Fruit fly).